A 279-amino-acid polypeptide reads, in one-letter code: MNNIKVFVLMAGLTGLVVAIGQALGGGQGAILALLLSAGMNLFMYWGSSSMVLRSYGAQVVTAQDAPELYEMVDRLRQRAGLPMPTVAIAPQDQPNAFATGRNPENSVVCVTQGIMRALSKDELEGVIAHELAHIKNRDMLLQTIAATMAGAVSNLAQFAFFFGGRSDDDDGVHPVAGIAMLIIGPIVAMVIQFAISRQREFKADAVGAEISGRPLSLANALLKLESGARRIPMQVSPSAATLAIVNPLAAFSMRGISKWMSTHPPTAERVAALQALAA.

2 helical membrane-spanning segments follow: residues 6 to 26 (VFVL…ALGG) and 29 to 49 (GAIL…WGSS). A Zn(2+)-binding site is contributed by H130. The active site involves E131. Residue H134 participates in Zn(2+) binding. A run of 2 helical transmembrane segments spans residues 145-165 (IAAT…FFGG) and 176-196 (VAGI…QFAI). Residue E201 participates in Zn(2+) binding.

Belongs to the peptidase M48B family. Zn(2+) is required as a cofactor.

The protein localises to the cell inner membrane. In Gemmatimonas aurantiaca (strain DSM 14586 / JCM 11422 / NBRC 100505 / T-27), this protein is Protease HtpX homolog.